We begin with the raw amino-acid sequence, 879 residues long: Metabotropic glutamate receptor 3 (879 aa).

Residues 1–22 form the signal peptide; sequence MKMLTRLQVLMLALFSKGFLVS. At 23-576 the chain is on the extracellular side; the sequence is LGDHNFMRRE…EDYIRWEDAW (554 aa). Residues Cys57 and Cys99 are joined by a disulfide bond. L-glutamate-binding positions include Ser151 and 172–174; that span reads AST. N-linked (GlcNAc...) asparagine glycosylation occurs at Asn209. Tyr222 serves as a coordination point for L-glutamate. 7 disulfide bridges follow: Cys240-Cys527, Cys361-Cys373, Cys412-Cys419, Cys509-Cys528, Cys513-Cys531, Cys534-Cys546, and Cys549-Cys562. A glycan (N-linked (GlcNAc...) asparagine) is linked at Asn292. Asp301 is an L-glutamate binding site. Residue Lys389 participates in L-glutamate binding. N-linked (GlcNAc...) asparagine glycans are attached at residues Asn414 and Asn439. The chain crosses the membrane as a helical span at residues 577–599; sequence AIGPVTIACLGFMCTCIVITVFI. Topologically, residues 600-613 are cytoplasmic; the sequence is KHNNTPLVKASGRE. A helical membrane pass occupies residues 614–634; that stretch reads LCYILLFGVSLSYCMTFFFIA. Residues 635–645 lie on the Extracellular side of the membrane; the sequence is KPSPVICALRR. Residues 646 to 664 form a helical membrane-spanning segment; the sequence is LGLGTSFAICYSALLTKTN. Topologically, residues 665–688 are cytoplasmic; it reads CIARIFDGVKNGAQRPKFISPSSQ. The chain crosses the membrane as a helical span at residues 689-709; the sequence is VFICLGLILVQIVMVSVWLIL. The Extracellular portion of the chain corresponds to 710 to 734; it reads ETPGTRRYTLPEKRETVILKCNVKD. Residues 735–756 traverse the membrane as a helical segment; that stretch reads SSMLISLTYDVVLVILCTVYAF. Over 757–769 the chain is Cytoplasmic; the sequence is KTRKCPENFNEAK. The chain crosses the membrane as a helical span at residues 770–792; the sequence is FIGFTMYTTCIIWLAFLPIFYVT. Topologically, residues 793–802 are extracellular; sequence SSDYRVQTTT. Residues 803-828 form a helical membrane-spanning segment; it reads MCISVSLSGFVVLGCLFAPKVHIVLF. Topologically, residues 829-879 are cytoplasmic; sequence QPQKNVVTHRLHLNRFSVSGTATTYSQSSASTYVPTVCNGREVLDSTTSSL.

It belongs to the G-protein coupled receptor 3 family. Interacts with TAMALIN.

It is found in the cell membrane. In terms of biological role, G-protein coupled receptor for glutamate. Ligand binding causes a conformation change that triggers signaling via guanine nucleotide-binding proteins (G proteins) and modulates the activity of down-stream effectors. Signaling inhibits adenylate cyclase activity. This Mus musculus (Mouse) protein is Metabotropic glutamate receptor 3 (Grm3).